The primary structure comprises 174 residues: Ribosome maturation factor RimM (174 aa).

The region spanning 96-169 (EPDTYYDHQL…ILEIDPPDGL (74 aa)) is the PRC barrel domain.

Belongs to the RimM family. As to quaternary structure, binds ribosomal protein uS19.

It is found in the cytoplasm. In terms of biological role, an accessory protein needed during the final step in the assembly of 30S ribosomal subunit, possibly for assembly of the head region. Essential for efficient processing of 16S rRNA. May be needed both before and after RbfA during the maturation of 16S rRNA. It has affinity for free ribosomal 30S subunits but not for 70S ribosomes. This chain is Ribosome maturation factor RimM, found in Mycobacterium marinum (strain ATCC BAA-535 / M).